A 286-amino-acid chain; its full sequence is MSIISTKYLLQDAQANGYAVPAFNIHNAETIQAILEVCSEMRSPVILAGTPGTFKHIALEEIYALCSAYSTTYNMPLALHLDHHESLDDIRRKVHAGVRSAMIDGSHFPFDENVKLVKSVVDFCHSQDCSVEAELGRLGGVEDDMSVDAESAFLTDPQEAKRFVELTGVDSLAVAIGTAHGLYSKTPKIDFQRLAEIREVVDVPLVLHGASDVPDEFVRRTIELGVTKVNVATELKIAFAGAVKAWFAENPQGNDPRYYMRVGMDAMKEVVRNKINVCGSANLISA.

D82 acts as the Proton donor in catalysis. Zn(2+) contacts are provided by H83 and H180. G181 serves as a coordination point for dihydroxyacetone phosphate. Residue H208 coordinates Zn(2+). Dihydroxyacetone phosphate-binding positions include 209–211 and 230–233; these read GAS and NVAT.

It belongs to the class II fructose-bisphosphate aldolase family. TagBP aldolase KbaY subfamily. As to quaternary structure, homotetramer. Forms a complex with KbaZ. It depends on Zn(2+) as a cofactor.

It catalyses the reaction D-tagatofuranose 1,6-bisphosphate = D-glyceraldehyde 3-phosphate + dihydroxyacetone phosphate. It participates in carbohydrate metabolism; D-tagatose 6-phosphate degradation; D-glyceraldehyde 3-phosphate and glycerone phosphate from D-tagatose 6-phosphate: step 2/2. In terms of biological role, catalytic subunit of the tagatose-1,6-bisphosphate aldolase KbaYZ, which catalyzes the reversible aldol condensation of dihydroxyacetone phosphate (DHAP or glycerone-phosphate) with glyceraldehyde 3-phosphate (G3P) to produce tagatose 1,6-bisphosphate (TBP). Requires KbaZ subunit for full activity and stability. The protein is D-tagatose-1,6-bisphosphate aldolase subunit KbaY of Escherichia coli O7:K1 (strain IAI39 / ExPEC).